The primary structure comprises 96 residues: Co-chaperonin GroES (96 aa).

The protein belongs to the GroES chaperonin family. As to quaternary structure, heptamer of 7 subunits arranged in a ring. Interacts with the chaperonin GroEL.

It is found in the cytoplasm. Together with the chaperonin GroEL, plays an essential role in assisting protein folding. The GroEL-GroES system forms a nano-cage that allows encapsulation of the non-native substrate proteins and provides a physical environment optimized to promote and accelerate protein folding. GroES binds to the apical surface of the GroEL ring, thereby capping the opening of the GroEL channel. This chain is Co-chaperonin GroES, found in Myxococcus xanthus (strain DK1622).